Reading from the N-terminus, the 803-residue chain is Dynein axonemal intermediate chain 4 (803 aa).

Polar residues predominate over residues methionine 1–serine 33. 3 disordered regions span residues methionine 1–glycine 41, leucine 88–glycine 109, and serine 143–proline 163. Positions serine 143 to serine 155 are enriched in low complexity. 6 WD repeats span residues glutamine 492 to valine 532, lysine 541 to aspartate 589, serine 616 to glutamate 656, glycine 660 to threonine 700, proline 703 to leucine 742, and asparagine 748 to glutamate 787.

Part of the multisubunit axonemal dynein complex formed at least of two heavy chains and a number of intermediate and light chains. Associated with axonemal dynein subunits such as, DNAH2, DNAI3, and DYNLT1. Interacts with DYNLT1.

The protein localises to the cytoplasm. It localises to the cytoskeleton. The protein resides in the flagellum axoneme. It is found in the cilium axoneme. Its subcellular location is the dynein axonemal particle. Its function is as follows. Plays a critical role in the assembly of axonemal dynein complex, thereby playing a role in ciliary motility. This chain is Dynein axonemal intermediate chain 4, found in Rattus norvegicus (Rat).